We begin with the raw amino-acid sequence, 175 residues long: NADH-ubiquinone oxidoreductase chain 6 (175 aa).

The next 6 membrane-spanning stretches (helical) occupy residues 1-21, 24-44, 51-71, 87-107, 113-133, and 148-168; these read MMYIVFIMSVLYVVGFIGFSS, SPVYGGMSLIVSGGLGCGIIM, LGLVVFLVYLGGMMVVFGYTI, VVLSAFLVGLLMEIFMIVWLF, LVGFYFGGLEDLVVLGEGSFG, and YGFWFLAMAGWMLFVSIFIAI.

It belongs to the complex I subunit 6 family. As to quaternary structure, core subunit of respiratory chain NADH dehydrogenase (Complex I) which is composed of 45 different subunits.

The protein resides in the mitochondrion inner membrane. It catalyses the reaction a ubiquinone + NADH + 5 H(+)(in) = a ubiquinol + NAD(+) + 4 H(+)(out). In terms of biological role, core subunit of the mitochondrial membrane respiratory chain NADH dehydrogenase (Complex I) which catalyzes electron transfer from NADH through the respiratory chain, using ubiquinone as an electron acceptor. Essential for the catalytic activity and assembly of complex I. This Mammuthus primigenius (Siberian woolly mammoth) protein is NADH-ubiquinone oxidoreductase chain 6 (MT-ND6).